The chain runs to 586 residues: Cryptochrome-1 (586 aa).

A Photolyase/cryptochrome alpha/beta domain is found at 3 to 132 (VNAVHWFRKG…EVIVRISHTL (130 aa)). Lys-11 participates in a covalent cross-link: Glycyl lysine isopeptide (Lys-Gly) (interchain with G-Cter in ubiquitin). Residues 50 to 54 (NRWRF) carry the LIR 1 motif. Ser-71 carries the phosphoserine; by AMPK modification. An LIR 2 motif is present at residues 82 to 87 (DVFPRL). Residue Lys-107 forms a Glycyl lysine isopeptide (Lys-Gly) (interchain with G-Cter in ubiquitin) linkage. The LIR 3 motif lies at 151 to 156 (KRFQTL). Residue Lys-159 forms a Glycyl lysine isopeptide (Lys-Gly) (interchain with G-Cter in ubiquitin) linkage. A Phosphoserine; by MAPK modification is found at Ser-247. Ser-252 lines the FAD pocket. 2 short sequence motifs (LIR) span residues 255 to 260 (LRFGCL) and 271 to 276 (DLYKKV). The residue at position 280 (Ser-280) is a Phosphoserine; by AMPK. An LIR 6 motif is present at residues 285–290 (SLYGQL). Residue Gln-289 coordinates FAD. A Glycyl lysine isopeptide (Lys-Gly) (interchain with G-Cter in ubiquitin) cross-link involves residue Lys-329. An LIR 7 motif is present at residues 335-339 (TGFPW). His-355 serves as a coordination point for FAD. The interval 371–470 (WISWEEGMKV…LIGINYPKPM (100 aa)) is required for inhibition of CLOCK-BMAL1-mediated transcription. The short motif at 379–384 (KVFEEL) is the LIR 8 element. 387 to 389 (DAD) provides a ligand contact to FAD. Short sequence motifs (LIR) lie at residues 395–400 (GSWMWL), 411–416 (HCYCPV), and 430–435 (RRYLPV). The segment at 471 to 493 (VNHAEASRLNIERMKQIYQQLSR) is interaction with TIMELESS. Lys-485 is covalently cross-linked (Glycyl lysine isopeptide (Lys-Gly) (interchain with G-Cter in ubiquitin)). 2 short sequence motifs (LIR) span residues 486–491 (QIYQQL) and 492–497 (SRYRGL). Residues 545-559 (QQTHLLKQGRSSMGT) show a composition bias toward polar residues. Residues 545-586 (QQTHLLKQGRSSMGTGLSGGKRPSQEEDTQSIGPKVQRQSTN) form a disordered region. Residue Lys-565 forms a Glycyl lysine isopeptide (Lys-Gly) (interchain with G-Cter in ubiquitin) linkage. Ser-568 is modified (phosphoserine).

This sequence belongs to the DNA photolyase class-1 family. Component of the circadian core oscillator, which includes the CRY proteins, CLOCK or NPAS2, BMAL1 or BMAL2, CSNK1D and/or CSNK1E, TIMELESS, and the PER proteins. Interacts directly with TIMELESS. Interacts directly with PER1, PER2 and PER3; interaction with PER2 inhibits its ubiquitination and vice versa. Interacts with FBXL21. Interacts with FBXL3. Interacts with CLOCK-BMAL1 independently of PER2 and DNA. Interacts with HDAC1, HDAC2 and SIN3B. Interacts with nuclear receptors AR, NR1D1, NR3C1/GR, RORA and RORC; the interaction with at least NR3C1/GR is ligand dependent. Interacts with PRKDC. Interacts with the G protein subunit alpha GNAS; the interaction may block GPCR-mediated regulation of cAMP concentrations. Interacts with PRMT5. Interacts with EZH2. Interacts with MYBBP1A, DOCK7, HNRNPU, RPL7A, RPL8 and RPS3. Interacts with PPP5C (via TPR repeats). Interacts with MAP1LC3B. Interacts with CLOCK. Interacts with BMAL1. Interacts weakly with HDAC3; this interaction is enhanced in the presence of FBXL3. Interacts with TRIM28, KCTD5 and DDB1. Interacts with FOXO1. Interacts with DTL and DDB1-CUL4A complex. Interacts with HNF4A. Interacts with PSMD2 in a KDM8-dependent manner. Interacts with KDM8 in a FBXL3-dependent manner. Interacts with PPARG in a ligand-dependent manner. Interacts with PPARD (via domain NR LBD) and NR1I2 (via domain NR LBD) in a ligand-dependent manner. Interacts with PPARA, NR1I3 and VDR. Requires FAD as cofactor. (6R)-5,10-methylene-5,6,7,8-tetrahydrofolate serves as cofactor. Post-translationally, phosphorylation on Ser-247 by MAPK is important for the inhibition of CLOCK-BMAL1-mediated transcriptional activity. Phosphorylation by CSNK1E requires interaction with PER1 or PER2. Phosphorylation at Ser-71 and Ser-280 by AMPK decreases protein stability. Phosphorylation at Ser-568 exhibits a robust circadian rhythm with a peak at CT8, increases protein stability, prevents SCF(FBXL3)-mediated degradation and is antagonized by interaction with PRKDC. In terms of processing, ubiquitinated by the SCF(FBXL3) and SCF(FBXL21) complexes, regulating the balance between degradation and stabilization. The SCF(FBXL3) complex is mainly nuclear and mediates ubiquitination and subsequent degradation of CRY1. In contrast, cytoplasmic SCF(FBXL21) complex-mediated ubiquitination leads to stabilize CRY1 and counteract the activity of the SCF(FBXL3) complex. The SCF(FBXL3) and SCF(FBXL21) complexes probably mediate ubiquitination at different Lys residues. Ubiquitination at Lys-11 and Lys-107 are specifically ubiquitinated by the SCF(FBXL21) complex but not by the SCF(FBXL3) complex. Ubiquitination may be inhibited by PER2. Deubiquitinated by USP7. Undergoes autophagy-mediated degradation in the liver in a time-dependent manner. Autophagic degradation of CRY1 (an inhibitor of gluconeogenesis) occurs during periods of reduced feeding allowing induction of gluconeogenesis and maintenance of blood glucose levels.

It is found in the cytoplasm. Its subcellular location is the nucleus. Its function is as follows. Transcriptional repressor which forms a core component of the circadian clock. The circadian clock, an internal time-keeping system, regulates various physiological processes through the generation of approximately 24 hour circadian rhythms in gene expression, which are translated into rhythms in metabolism and behavior. It is derived from the Latin roots 'circa' (about) and 'diem' (day) and acts as an important regulator of a wide array of physiological functions including metabolism, sleep, body temperature, blood pressure, endocrine, immune, cardiovascular, and renal function. Consists of two major components: the central clock, residing in the suprachiasmatic nucleus (SCN) of the brain, and the peripheral clocks that are present in nearly every tissue and organ system. Both the central and peripheral clocks can be reset by environmental cues, also known as Zeitgebers (German for 'timegivers'). The predominant Zeitgeber for the central clock is light, which is sensed by retina and signals directly to the SCN. The central clock entrains the peripheral clocks through neuronal and hormonal signals, body temperature and feeding-related cues, aligning all clocks with the external light/dark cycle. Circadian rhythms allow an organism to achieve temporal homeostasis with its environment at the molecular level by regulating gene expression to create a peak of protein expression once every 24 hours to control when a particular physiological process is most active with respect to the solar day. Transcription and translation of core clock components (CLOCK, NPAS2, BMAL1, BMAL2, PER1, PER2, PER3, CRY1 and CRY2) plays a critical role in rhythm generation, whereas delays imposed by post-translational modifications (PTMs) are important for determining the period (tau) of the rhythms (tau refers to the period of a rhythm and is the length, in time, of one complete cycle). A diurnal rhythm is synchronized with the day/night cycle, while the ultradian and infradian rhythms have a period shorter and longer than 24 hours, respectively. Disruptions in the circadian rhythms contribute to the pathology of cardiovascular diseases, cancer, metabolic syndromes and aging. A transcription/translation feedback loop (TTFL) forms the core of the molecular circadian clock mechanism. Transcription factors, CLOCK or NPAS2 and BMAL1 or BMAL2, form the positive limb of the feedback loop, act in the form of a heterodimer and activate the transcription of core clock genes and clock-controlled genes (involved in key metabolic processes), harboring E-box elements (5'-CACGTG-3') within their promoters. The core clock genes: PER1/2/3 and CRY1/2 which are transcriptional repressors form the negative limb of the feedback loop and interact with the CLOCK|NPAS2-BMAL1|BMAL2 heterodimer inhibiting its activity and thereby negatively regulating their own expression. This heterodimer also activates nuclear receptors NR1D1/2 and RORA/B/G, which form a second feedback loop and which activate and repress BMAL1 transcription, respectively. CRY1 and CRY2 have redundant functions but also differential and selective contributions at least in defining the pace of the SCN circadian clock and its circadian transcriptional outputs. More potent transcriptional repressor in cerebellum and liver than CRY2, though more effective in lengthening the period of the SCN oscillator. On its side, CRY2 seems to play a critical role in tuning SCN circadian period by opposing the action of CRY1. With CRY2, is dispensable for circadian rhythm generation but necessary for the development of intercellular networks for rhythm synchrony. Capable of translocating circadian clock core proteins such as PER proteins to the nucleus. Interacts with CLOCK-BMAL1 independently of PER proteins and is found at CLOCK-BMAL1-bound sites, suggesting that CRY may act as a molecular gatekeeper to maintainCLOCK-BMAL1 in a poised and repressed state until the proper time for transcriptional activation. Represses the CLOCK-BMAL1 induced transcription of BHLHE40/DEC1, ATF4, MTA1, KLF10 and NAMPT. May repress circadian target genes expression in collaboration with HDAC1 and HDAC2 through histone deacetylation. Mediates the clock-control activation of ATR and modulates ATR-mediated DNA damage checkpoint. In liver, mediates circadian regulation of cAMP signaling and gluconeogenesis by binding to membrane-coupled G proteins and blocking glucagon-mediated increases in intracellular cAMP concentrations and CREB1 phosphorylation. Inhibits hepatic gluconeogenesis by decreasing nuclear FOXO1 levels that down-regulates gluconeogenic gene expression. Besides its role in the maintenance of the circadian clock, is also involved in the regulation of other processes. Represses glucocorticoid receptor NR3C1/GR-induced transcriptional activity by binding to glucocorticoid response elements (GREs). Plays a key role in glucose and lipid metabolism modulation, in part, through the transcriptional regulation of genes involved in these pathways, such as LEP or ACSL4. Represses PPARD and its target genes in the skeletal muscle and limits exercise capacity. Plays an essential role in the generation of circadian rhythms in the retina. Represses the transcriptional activity of NR1I2. The protein is Cryptochrome-1 (CRY1) of Macaca fascicularis (Crab-eating macaque).